Consider the following 65-residue polypeptide: Large ribosomal subunit protein bL35 (65 aa).

Residues 1–16 (MPKMKTKKSAAKRFKV) are compositionally biased toward basic residues. A disordered region spans residues 1 to 25 (MPKMKTKKSAAKRFKVRGSGSIKRG).

It belongs to the bacterial ribosomal protein bL35 family.

This chain is Large ribosomal subunit protein bL35, found in Bordetella parapertussis (strain 12822 / ATCC BAA-587 / NCTC 13253).